A 325-amino-acid polypeptide reads, in one-letter code: Clavaminate synthase 2 (325 aa).

Residues His145, Glu147, and His280 each coordinate Fe cation. Arg294 lines the 2-oxoglutarate pocket.

This sequence belongs to the clavaminate synthase family. The cofactor is Fe(2+).

It carries out the reaction deoxyamidinoproclavaminate + 2-oxoglutarate + O2 = amidinoproclavaminate + succinate + CO2. The catalysed reaction is proclavaminate + 2-oxoglutarate + O2 = dihydroclavaminate + succinate + CO2 + H2O. It catalyses the reaction dihydroclavaminate + 2-oxoglutarate + O2 = clavaminate + succinate + CO2 + H2O. It functions in the pathway antibiotic biosynthesis; clavulanate biosynthesis; clavulanate from D-glyceraldehyde 3-phosphate and L-arginine: step 3/8. The protein operates within antibiotic biosynthesis; clavulanate biosynthesis; clavulanate from D-glyceraldehyde 3-phosphate and L-arginine: step 5/8. Its pathway is antibiotic biosynthesis; clavulanate biosynthesis; clavulanate from D-glyceraldehyde 3-phosphate and L-arginine: step 6/8. The protein is Clavaminate synthase 2 (cs2) of Streptomyces clavuligerus.